The chain runs to 285 residues: Inositol oxygenase (285 aa).

Arg29 contributes to the substrate binding site. Phosphoserine is present on Ser33. Residue Asp85–Asp88 participates in substrate binding. Fe cation-binding residues include His98, His123, and Asp124. Residues Lys127 and Gly141–Asp142 contribute to the substrate site. Residues His194, His220, and Asp253 each coordinate Fe cation. His220–Ser221 contacts substrate.

This sequence belongs to the myo-inositol oxygenase family. Requires Fe cation as cofactor. Kidney specific. Renal proximal tubules.

It localises to the cytoplasm. It carries out the reaction myo-inositol + O2 = D-glucuronate + H2O + H(+). Its pathway is polyol metabolism; myo-inositol degradation into D-glucuronate; D-glucuronate from myo-inositol: step 1/1. In Mus musculus (Mouse), this protein is Inositol oxygenase (Miox).